The following is a 506-amino-acid chain: Cobyric acid synthase (506 aa).

The GATase cobBQ-type domain maps to 251-448 (DITIAIVQLP…LHGLFDSDAF (198 aa)). Residue Cys-332 is the Nucleophile of the active site. Residue His-440 is part of the active site.

The protein belongs to the CobB/CobQ family. CobQ subfamily. As to quaternary structure, homodimer.

Its pathway is cofactor biosynthesis; adenosylcobalamin biosynthesis. Its function is as follows. Catalyzes amidations at positions B, D, E, and G on adenosylcobyrinic A,C-diamide. NH(2) groups are provided by glutamine, and one molecule of ATP is hydrogenolyzed for each amidation. The chain is Cobyric acid synthase (cbiP) from Salmonella typhimurium (strain LT2 / SGSC1412 / ATCC 700720).